The primary structure comprises 308 residues: Polyprenal reductase (308 aa).

Topologically, residues 1-2 (MT) are cytoplasmic. Residues 3–23 (LLALVWLLLDATFLITLLWHL) form a helical membrane-spanning segment. The Lumenal segment spans residues 24-65 (LQGCKSGHSLLCSVFQDLIRYGKTKTGLQRPAWLQWFDIPKR). The chain crosses the membrane as a helical span at residues 66–86 (CFWHFYCVSLIWNGCLLWILL). Residues 87–120 (RLLLQSVPVPEWLQLVLHFLHAGSEPQILDRELS) lie on the Cytoplasmic side of the membrane. Residues 121–141 (VILALALLWLHSLRRLLECLF) traverse the membrane as a helical segment. Residues 142–148 (VSVFSNG) are Lumenal-facing. A helical transmembrane segment spans residues 149–169 (VIHLVQYCFGLGYYFLIGITV). Over 170–184 (LTYCPLDRRTVSTDN) the chain is Cytoplasmic. The chain crosses the membrane as a helical span at residues 185–205 (LLTQCHWYHILGLALYIWASL). At 206 to 255 (HQYRCHCILAGLRKSASGNVINLNHSVPCGDWFERVSCPHYFAELLIYVS) the chain is on the lumenal side. The chain crosses the membrane as a helical span at residues 256–276 (IAVVFGLLNTIWWLVVLYVLL). Over 277–308 (NQALAALLCHEFYHEKFDTYPIHRKAFIPFIF) the chain is Cytoplasmic.

This sequence belongs to the steroid 5-alpha reductase family. Polyprenal reductase subfamily.

The protein localises to the endoplasmic reticulum membrane. It catalyses the reaction a di-trans,poly-cis-dolichal + NADP(+) = a di-trans,poly-cis-polyprenal + NADPH + H(+). The catalysed reaction is a 3-oxo-5alpha-steroid + NADP(+) = a 3-oxo-Delta(4)-steroid + NADPH + H(+). It carries out the reaction androst-4-ene-3,17-dione + NADPH + H(+) = 5alpha-androstan-3,17-dione + NADP(+). The enzyme catalyses 17beta-hydroxy-5alpha-androstan-3-one + NADP(+) = testosterone + NADPH + H(+). It participates in protein modification; protein glycosylation. Its function is as follows. Plays a key role in early steps of protein N-linked glycosylation by being involved in the conversion of polyprenol into dolichol. Acts as a polyprenal reductase that mediates the reduction of polyprenal into dolichal in a NADP-dependent mechanism. Dolichols are required for the synthesis of dolichol-linked monosaccharides and the oligosaccharide precursor used for N-glycosylation. Also able to convert testosterone (T) into 5-alpha-dihydrotestosterone (DHT). The polypeptide is Polyprenal reductase (srd5a3) (Xenopus tropicalis (Western clawed frog)).